The sequence spans 126 residues: C-type natriuretic peptide (126 aa).

An N-terminal signal peptide occupies residues 1-23 (MHLSQLLACALLLTLLSLRPSEA). The segment at 19–72 (RPSEAKPGAPPKVPRTPPGEEVAEPQAAGGGQKKGDKTPGGGGANLKGDRSRLL) is disordered. Residues 24-73 (KPGAPPKVPRTPPGEEVAEPQAAGGGQKKGDKTPGGGGANLKGDRSRLLR) constitute a propeptide that is removed on maturation. Positions 26–35 (GAPPKVPRTP) are enriched in pro residues. A compositionally biased stretch (gly residues) spans 46–63 (AGGGQKKGDKTPGGGGAN). A disulfide bond links Cys110 and Cys126.

It belongs to the natriuretic peptide family. In terms of processing, degraded by IDE (in vitro).

The protein localises to the secreted. Functionally, hormone which plays a role in endochondral ossification through regulation of cartilaginous growth plate chondrocytes proliferation and differentiation. May also be vasoactive and natriuretic. Acts by specifically binding and stimulating NPR2 to produce cGMP. Binds the clearance receptor NPR3. This is C-type natriuretic peptide (NPPC) from Sus scrofa (Pig).